The sequence spans 395 residues: Xylose isomerase (395 aa).

Residues His-54 and Asp-57 contribute to the active site. Residues Glu-181, Glu-217, His-220, Asp-245, Asp-255, Asp-257, and Asp-293 each coordinate Mg(2+).

This sequence belongs to the xylose isomerase family. Homotetramer. Mg(2+) is required as a cofactor.

Its subcellular location is the cytoplasm. The enzyme catalyses alpha-D-xylose = alpha-D-xylulofuranose. This chain is Xylose isomerase, found in Arthrobacter sp. (strain FB24).